The sequence spans 174 residues: Small t antigen (174 aa).

Met1 is modified (N-acetylmethionine; by host). The region spanning 12–75 (QLMDLLGLER…VKYAHQPDFG (64 aa)) is the J domain. Residues 103–116 (CAKKMSANCICLLC) form a C4-type; atypical zinc finger. The segment at 122-143 (HENRKLYRKDPLVWVDCYCFDC) adopts an H1C3-type; atypical zinc-finger fold.

As to quaternary structure, interacts with host PPP2R1A; the interaction inhibits PP2A activity.

The protein resides in the host cytoplasm. Its subcellular location is the host nucleus. In terms of biological role, promotes efficient viral genome replication by accelerating both G1 and S phase progression of the cell cycle. Inhibits host PP2A by binding to the A subunit, thereby displacing lower affinity regulatory B subunit. Inactivation of PP2A in turn results in the transactivation of cyclin A and cyclin D1 promoters. Late during the infection cycle, ST may induce dephosphorylation of host eIF4E-binding protein EIF4EBP1 leading to the inhibition of cap-dependent translation. May establish and maintain high levels of viral genomes during persistent infection in cell culture. This Simian virus 40 (SV40) protein is Small t antigen.